The sequence spans 1410 residues: Non-secreted LysM effector LysM15 (1410 aa).

2 consecutive LysM domains span residues 1179–1225 and 1231–1277; these read TTYT…DICM and TQYT…EILG. The span at 1291–1303 shows a compositional bias: low complexity; it reads TTGDGITTTPGNG. The interval 1291–1317 is disordered; that stretch reads TTGDGITTTPGNGEYAQGVVSPPENST. Residues 1328 to 1375 form the LysM 3 domain; sequence RWYSATADDLCVQICLKSGVSAKLFKAANPSLAADCDNSLIAGDAYCV.

This sequence belongs to the secreted LysM effector family.

In terms of biological role, non-secreted LysM effector that might be involved in manipulation of host defenses for successful infection. This is Non-secreted LysM effector LysM15 from Penicillium expansum (Blue mold rot fungus).